A 172-amino-acid polypeptide reads, in one-letter code: Protein-export protein SecB (172 aa).

Residues 1 to 22 form a disordered region; sequence MADETSADINNPALQPNGEDTS. The segment covering 7–20 has biased composition (polar residues); it reads ADINNPALQPNGED.

It belongs to the SecB family. In terms of assembly, homotetramer, a dimer of dimers. One homotetramer interacts with 1 SecA dimer.

The protein resides in the cytoplasm. One of the proteins required for the normal export of preproteins out of the cell cytoplasm. It is a molecular chaperone that binds to a subset of precursor proteins, maintaining them in a translocation-competent state. It also specifically binds to its receptor SecA. The sequence is that of Protein-export protein SecB from Sphingopyxis alaskensis (strain DSM 13593 / LMG 18877 / RB2256) (Sphingomonas alaskensis).